The primary structure comprises 357 residues: UDP-N-acetylglucosamine--N-acetylmuramyl-(pentapeptide) pyrophosphoryl-undecaprenol N-acetylglucosamine transferase (357 aa).

Residues 12–14 (TGG), Asn-124, Arg-163, Ser-191, Ile-245, 264–269 (ALTVSE), and Gln-290 contribute to the UDP-N-acetyl-alpha-D-glucosamine site.

Belongs to the glycosyltransferase 28 family. MurG subfamily.

It is found in the cell inner membrane. The catalysed reaction is di-trans,octa-cis-undecaprenyl diphospho-N-acetyl-alpha-D-muramoyl-L-alanyl-D-glutamyl-meso-2,6-diaminopimeloyl-D-alanyl-D-alanine + UDP-N-acetyl-alpha-D-glucosamine = di-trans,octa-cis-undecaprenyl diphospho-[N-acetyl-alpha-D-glucosaminyl-(1-&gt;4)]-N-acetyl-alpha-D-muramoyl-L-alanyl-D-glutamyl-meso-2,6-diaminopimeloyl-D-alanyl-D-alanine + UDP + H(+). The protein operates within cell wall biogenesis; peptidoglycan biosynthesis. In terms of biological role, cell wall formation. Catalyzes the transfer of a GlcNAc subunit on undecaprenyl-pyrophosphoryl-MurNAc-pentapeptide (lipid intermediate I) to form undecaprenyl-pyrophosphoryl-MurNAc-(pentapeptide)GlcNAc (lipid intermediate II). This is UDP-N-acetylglucosamine--N-acetylmuramyl-(pentapeptide) pyrophosphoryl-undecaprenol N-acetylglucosamine transferase from Nitrosospira multiformis (strain ATCC 25196 / NCIMB 11849 / C 71).